A 79-amino-acid chain; its full sequence is Probable [Fe-S]-dependent transcriptional repressor (79 aa).

Positions 56, 61, 64, and 71 each coordinate iron-sulfur cluster.

Belongs to the FeoC family.

May function as a transcriptional regulator that controls feoABC expression. The polypeptide is Probable [Fe-S]-dependent transcriptional repressor (Klebsiella pneumoniae subsp. pneumoniae (strain ATCC 700721 / MGH 78578)).